The chain runs to 281 residues: Shikimate dehydrogenase (NADP(+)) (281 aa).

Residues 15 to 17 (SKS) and threonine 62 contribute to the shikimate site. Catalysis depends on lysine 66, which acts as the Proton acceptor. Positions 87 and 102 each coordinate shikimate. NADP(+) contacts are provided by residues 127–131 (GAGGS), 151–156 (NRTPER), and leucine 217. Tyrosine 219 contributes to the shikimate binding site. Residue glycine 241 coordinates NADP(+).

The protein belongs to the shikimate dehydrogenase family. As to quaternary structure, homodimer.

The catalysed reaction is shikimate + NADP(+) = 3-dehydroshikimate + NADPH + H(+). It functions in the pathway metabolic intermediate biosynthesis; chorismate biosynthesis; chorismate from D-erythrose 4-phosphate and phosphoenolpyruvate: step 4/7. Its function is as follows. Involved in the biosynthesis of the chorismate, which leads to the biosynthesis of aromatic amino acids. Catalyzes the reversible NADPH linked reduction of 3-dehydroshikimate (DHSA) to yield shikimate (SA). The chain is Shikimate dehydrogenase (NADP(+)) from Stenotrophomonas maltophilia (strain K279a).